A 462-amino-acid polypeptide reads, in one-letter code: Cysteine--tRNA ligase (462 aa).

Cys30 is a binding site for Zn(2+). Positions 32-42 match the 'HIGH' region motif; sequence MTVYDYCHVGH. The Zn(2+) site is built by Cys214, His239, and Glu243. The 'KMSKS' region motif lies at 271-275; it reads KMSKS. Lys274 provides a ligand contact to ATP.

The protein belongs to the class-I aminoacyl-tRNA synthetase family. As to quaternary structure, monomer. It depends on Zn(2+) as a cofactor.

Its subcellular location is the cytoplasm. The enzyme catalyses tRNA(Cys) + L-cysteine + ATP = L-cysteinyl-tRNA(Cys) + AMP + diphosphate. The chain is Cysteine--tRNA ligase from Cupriavidus necator (strain ATCC 17699 / DSM 428 / KCTC 22496 / NCIMB 10442 / H16 / Stanier 337) (Ralstonia eutropha).